Reading from the N-terminus, the 962-residue chain is UPF0182 protein SACE_1102 (962 aa).

7 helical membrane-spanning segments follow: residues 10-30, 55-75, 106-126, 168-188, 203-223, 250-270, and 279-299; these read ILLILGGVVLIALIAGSRLLG, LGLGVAAGAFVGVVLLLNLWI, LFGWGIPIVIAVIAGLTAQSD, FVAITVGFIGALVTHYIFGGI, IQLSVLAGLFVLLKAVDYFLD, VKLILMIIAVFCALAFFAAIF, and IATVLLVLSSILVGSVWPALL. Disordered stretches follow at residues 707-730 and 876-916; these read RTFWEVPPDPTSSGQGGSNQGNQQ and FGPG…EMTK. Residues 899–910 are compositionally biased toward pro residues; that stretch reads GQQPPTQQPPAG.

The protein belongs to the UPF0182 family.

It localises to the cell membrane. This is UPF0182 protein SACE_1102 from Saccharopolyspora erythraea (strain ATCC 11635 / DSM 40517 / JCM 4748 / NBRC 13426 / NCIMB 8594 / NRRL 2338).